Reading from the N-terminus, the 282-residue chain is tRNA (guanine-N(7)-)-methyltransferase (282 aa).

Positions 1–36 (MAGPPNKKQKREDYRTARENGEESKELPKKKFYRQR) are disordered. Residues 10–29 (KREDYRTARENGEESKELPK) show a composition bias toward basic and acidic residues. S-adenosyl-L-methionine contacts are provided by residues G100, 123–124 (EI), 158–159 (NT), and C178. The active site involves D181. 256-258 (TEE) serves as a coordination point for S-adenosyl-L-methionine.

The protein belongs to the class I-like SAM-binding methyltransferase superfamily. TrmB family. Forms a complex with trm82.

It is found in the nucleus. It catalyses the reaction guanosine(46) in tRNA + S-adenosyl-L-methionine = N(7)-methylguanosine(46) in tRNA + S-adenosyl-L-homocysteine. It functions in the pathway tRNA modification; N(7)-methylguanine-tRNA biosynthesis. Its function is as follows. Catalyzes the formation of N(7)-methylguanine at position 46 (m7G46) in tRNA. This chain is tRNA (guanine-N(7)-)-methyltransferase (trm8), found in Botryotinia fuckeliana (strain B05.10) (Noble rot fungus).